Here is a 333-residue protein sequence, read N- to C-terminus: 4-hydroxythreonine-4-phosphate dehydrogenase (333 aa).

His-136 and Thr-137 together coordinate substrate. A divalent metal cation contacts are provided by His-166, His-211, and His-266. Lys-274, Asn-283, and Arg-292 together coordinate substrate.

It belongs to the PdxA family. As to quaternary structure, homodimer. Zn(2+) is required as a cofactor. Mg(2+) serves as cofactor. It depends on Co(2+) as a cofactor.

It localises to the cytoplasm. It carries out the reaction 4-(phosphooxy)-L-threonine + NAD(+) = 3-amino-2-oxopropyl phosphate + CO2 + NADH. It functions in the pathway cofactor biosynthesis; pyridoxine 5'-phosphate biosynthesis; pyridoxine 5'-phosphate from D-erythrose 4-phosphate: step 4/5. Its function is as follows. Catalyzes the NAD(P)-dependent oxidation of 4-(phosphooxy)-L-threonine (HTP) into 2-amino-3-oxo-4-(phosphooxy)butyric acid which spontaneously decarboxylates to form 3-amino-2-oxopropyl phosphate (AHAP). The polypeptide is 4-hydroxythreonine-4-phosphate dehydrogenase (Acidithiobacillus ferrooxidans (strain ATCC 23270 / DSM 14882 / CIP 104768 / NCIMB 8455) (Ferrobacillus ferrooxidans (strain ATCC 23270))).